Here is a 207-residue protein sequence, read N- to C-terminus: Inner membrane-spanning protein YciB (207 aa).

Helical transmembrane passes span 3 to 23 (FLFDLLPIVLFFVAFKVAEGQ), 51 to 71 (VLLATLVVIVATFAQIGWLLL), 78 to 98 (TMLWVSLGLVTVLGGATVWFH), 105 to 125 (WKPSVLYWVMGTAFWLSHAVF), 150 to 170 (FMWIAFFAFMGLANLYVAYSF), and 178 to 198 (FKLFGGVGLMLLFTLAQGLYL).

The protein belongs to the YciB family.

The protein resides in the cell inner membrane. Functionally, plays a role in cell envelope biogenesis, maintenance of cell envelope integrity and membrane homeostasis. In Methylibium petroleiphilum (strain ATCC BAA-1232 / LMG 22953 / PM1), this protein is Inner membrane-spanning protein YciB.